Reading from the N-terminus, the 285-residue chain is Small ribosomal subunit protein uS2 (285 aa).

Residues 228–285 form a disordered region; it reads RAGLSADKDAKPEAGAGEPLAEWEQELLSQAAPAAEAEAAPAAEAEAAPAAEAPATEA. A compositionally biased stretch (low complexity) spans 258 to 285; it reads AAPAAEAEAAPAAEAEAAPAAEAPATEA.

This sequence belongs to the universal ribosomal protein uS2 family.

This is Small ribosomal subunit protein uS2 from Rhodococcus erythropolis (strain PR4 / NBRC 100887).